Reading from the N-terminus, the 660-residue chain is Bifunctional polymyxin resistance protein ArnA (660 aa).

The segment at 1-304 (MKAVIFAYHD…TLGLVAGARL (304 aa)) is formyltransferase ArnAFT. The Proton donor; for formyltransferase activity role is filled by His-104. (6R)-10-formyltetrahydrofolate is bound by residues Arg-114 and 136 to 140 (VKRAD). The dehydrogenase ArnADH stretch occupies residues 314–660 (RRIRVLILGV…RSVDVAERAS (347 aa)). Residues Asp-347 and 368-369 (DI) contribute to the NAD(+) site. Residues Ala-393, Tyr-398, and 432–433 (TS) each bind UDP-alpha-D-glucuronate. Residue Glu-434 is the Proton acceptor; for decarboxylase activity of the active site. UDP-alpha-D-glucuronate is bound by residues Arg-460, Asn-492, 526 to 535 (KLIDGGQQKR), and Tyr-613. The active-site Proton donor; for decarboxylase activity is the Arg-619.

This sequence in the N-terminal section; belongs to the Fmt family. UDP-L-Ara4N formyltransferase subfamily. It in the C-terminal section; belongs to the NAD(P)-dependent epimerase/dehydratase family. UDP-glucuronic acid decarboxylase subfamily. As to quaternary structure, homohexamer, formed by a dimer of trimers.

The enzyme catalyses UDP-alpha-D-glucuronate + NAD(+) = UDP-beta-L-threo-pentopyranos-4-ulose + CO2 + NADH. It catalyses the reaction UDP-4-amino-4-deoxy-beta-L-arabinose + (6R)-10-formyltetrahydrofolate = UDP-4-deoxy-4-formamido-beta-L-arabinose + (6S)-5,6,7,8-tetrahydrofolate + H(+). It functions in the pathway nucleotide-sugar biosynthesis; UDP-4-deoxy-4-formamido-beta-L-arabinose biosynthesis; UDP-4-deoxy-4-formamido-beta-L-arabinose from UDP-alpha-D-glucuronate: step 1/3. Its pathway is nucleotide-sugar biosynthesis; UDP-4-deoxy-4-formamido-beta-L-arabinose biosynthesis; UDP-4-deoxy-4-formamido-beta-L-arabinose from UDP-alpha-D-glucuronate: step 3/3. It participates in bacterial outer membrane biogenesis; lipopolysaccharide biosynthesis. Bifunctional enzyme that catalyzes the oxidative decarboxylation of UDP-glucuronic acid (UDP-GlcUA) to UDP-4-keto-arabinose (UDP-Ara4O) and the addition of a formyl group to UDP-4-amino-4-deoxy-L-arabinose (UDP-L-Ara4N) to form UDP-L-4-formamido-arabinose (UDP-L-Ara4FN). The modified arabinose is attached to lipid A and is required for resistance to polymyxin and cationic antimicrobial peptides. The sequence is that of Bifunctional polymyxin resistance protein ArnA from Salmonella choleraesuis (strain SC-B67).